The primary structure comprises 312 residues: Homoserine O-acetyltransferase (312 aa).

C142 functions as the Acyl-thioester intermediate in the catalytic mechanism. Substrate contacts are provided by K163 and S194. H237 functions as the Proton acceptor in the catalytic mechanism. E239 is an active-site residue. A substrate-binding site is contributed by R251.

The protein belongs to the MetA family.

Its subcellular location is the cytoplasm. The catalysed reaction is L-homoserine + acetyl-CoA = O-acetyl-L-homoserine + CoA. The protein operates within amino-acid biosynthesis; L-methionine biosynthesis via de novo pathway; O-acetyl-L-homoserine from L-homoserine: step 1/1. Functionally, transfers an acetyl group from acetyl-CoA to L-homoserine, forming acetyl-L-homoserine. This Catenibacterium mitsuokai (strain DSM 15897 / JCM 10609 / CCUG 48821 A / CIP 106738 / RCA14-39) protein is Homoserine O-acetyltransferase.